Consider the following 261-residue polypeptide: Claudin-18 (261 aa).

The Cytoplasmic segment spans residues methionine 1–cysteine 6. The helical transmembrane segment at glutamine 7–methionine 27 threads the bilayer. Residues aspartate 28 to arginine 80 are Extracellular-facing. A helical transmembrane segment spans residues alanine 81–leucine 101. At lysine 102–glycine 122 the chain is on the cytoplasmic side. Residues isoleucine 123–leucine 143 traverse the membrane as a helical segment. Topologically, residues valine 144–alanine 173 are extracellular. A helical membrane pass occupies residues alanine 174 to isoleucine 194. The Cytoplasmic portion of the chain corresponds to alanine 195–valine 261. Positions alanine 195–valine 261 are required for role in regulation of RANKL-induced osteoclast differentiation. A Phosphoserine modification is found at serine 214. A disordered region spans residues aspartate 242–valine 261.

It belongs to the claudin family. In terms of assembly, interacts with TJP2/ZO-2. Interacts with TJP1/ZO-1. Interacts with YAP1 (phosphorylated); the interaction sequesters YAP1 away from the nucleus and thereby restricts transcription of YAP1 target genes. Interacts with CLDN19. In terms of tissue distribution, expressed in the lung (at protein level).

The protein localises to the cell junction. The protein resides in the tight junction. Its subcellular location is the cell membrane. In terms of biological role, involved in alveolar fluid homeostasis via regulation of alveolar epithelial tight junction composition and therefore ion transport and solute permeability, potentially via downstream regulation of the actin cytoskeleton organization and beta-2-adrenergic signaling. Required for lung alveolarization and maintenance of the paracellular alveolar epithelial barrier. Acts to maintain epithelial progenitor cell proliferation and organ size, via regulation of YAP1 localization away from the nucleus and thereby restriction of YAP1 target gene transcription. Acts as a negative regulator of RANKL-induced osteoclast differentiation, potentially via relocation of TJP2/ZO-2 away from the nucleus, subsequently involved in bone resorption in response to calcium deficiency. Mediates the osteoprotective effects of estrogen, potentially via acting downstream of estrogen signaling independently of RANKL signaling pathways. Its function is as follows. Required for the formation of the gastric paracellular barrier via its role in tight junction formation, thereby involved in the response to gastric acidification. The protein is Claudin-18 of Rattus norvegicus (Rat).